Here is a 427-residue protein sequence, read N- to C-terminus: MAP kinase-interacting serine/threonine-protein kinase 1 (427 aa).

The segment covering 1–11 (MVSSQKLEKPI) has biased composition (basic and acidic residues). A disordered region spans residues 1 to 37 (MVSSQKLEKPIEMGSSEPLPIVDSDKRRKKKRKTRAT). A Phosphothreonine; by PAK2 modification is found at Thr-34. A Phosphoserine; by PAK2 modification is found at Ser-39. Residues 49–333 (QLTSELLGEG…AAQVLQHPWV (285 aa)) enclose the Protein kinase domain. ATP is bound by residues 55 to 63 (LGEGAYAKV) and Lys-78. Catalysis depends on Asp-170, which acts as the Proton acceptor. 2 positions are modified to phosphoserine: Ser-180 and Ser-185. Thr-209, Thr-214, and Thr-344 each carry phosphothreonine. Residues 407-427 (RALAQAGRSRDANPCLTPAGL) form a disordered region.

This sequence belongs to the protein kinase superfamily. CAMK Ser/Thr protein kinase family. Interacts with the C-terminal regions of EIF4G1 and EIF4G2. Also binds to dephosphorylated ERK1 and ERK2, and to the p38 kinases. The cofactor is Mg(2+). In terms of processing, dual phosphorylation of Thr-209 and Thr-214 activates the kinase. Phosphorylation of Thr-344 activates the kinase. MAPK3/ERK1 is one of the kinases which activate MKNK1/MNK1. Phosphorylation by PAK2 leads to a reduced phosphorylation of EIF4G1. As to expression, ubiquitously expressed in all tissues examined, with high levels in skeletal muscle.

It carries out the reaction L-seryl-[protein] + ATP = O-phospho-L-seryl-[protein] + ADP + H(+). The catalysed reaction is L-threonyl-[protein] + ATP = O-phospho-L-threonyl-[protein] + ADP + H(+). With respect to regulation, phosphorylated and activated by the p38 kinases and kinases in the Erk pathway. Functionally, may play a role in the response to environmental stress and cytokines. Appears to regulate translation by phosphorylating EIF4E, thus increasing the affinity of this protein for the 7-methylguanosine-containing mRNA cap. The polypeptide is MAP kinase-interacting serine/threonine-protein kinase 1 (Mknk1) (Mus musculus (Mouse)).